Reading from the N-terminus, the 247-residue chain is 5'-nucleotidase SurE (247 aa).

4 residues coordinate a divalent metal cation: aspartate 8, aspartate 9, serine 39, and asparagine 91.

This sequence belongs to the SurE nucleotidase family. It depends on a divalent metal cation as a cofactor.

Its subcellular location is the cytoplasm. The catalysed reaction is a ribonucleoside 5'-phosphate + H2O = a ribonucleoside + phosphate. Nucleotidase that shows phosphatase activity on nucleoside 5'-monophosphates. The protein is 5'-nucleotidase SurE of Chromobacterium violaceum (strain ATCC 12472 / DSM 30191 / JCM 1249 / CCUG 213 / NBRC 12614 / NCIMB 9131 / NCTC 9757 / MK).